Here is a 122-residue protein sequence, read N- to C-terminus: Small ribosomal subunit protein bS16 (122 aa).

A disordered region spans residues alanine 87–alanine 122. Residues arginine 103–alanine 122 are compositionally biased toward low complexity.

It belongs to the bacterial ribosomal protein bS16 family.

This chain is Small ribosomal subunit protein bS16, found in Methylocella silvestris (strain DSM 15510 / CIP 108128 / LMG 27833 / NCIMB 13906 / BL2).